A 200-amino-acid chain; its full sequence is Pre-mRNA cleavage factor Im 25 kDa subunit 2 (200 aa).

The Nudix hydrolase domain maps to 45-172 (GMRTSVEGIL…KLLAVPLFEL (128 aa)). An interaction with RNA region spans residues 72–74 (TFC). The Nudix box signature appears at 79–100 (GRLKPGENEADGLKRKLTSKLG).

The protein belongs to the Nudix hydrolase family. CPSF5 subfamily. Homodimer. Component of the cleavage factor Im (CFIm) complex. Forms a complex with cleavage and polyadenylation specificity factor (CPSF) subunits FIPS5, PAPS4 and CPSF30.

Its subcellular location is the nucleus. Functionally, component of the cleavage factor Im (CFIm) complex that plays a key role in pre-mRNA 3'-processing. Involved in association with CPSF6 or CPSF7 in pre-MRNA 3'-end poly(A) site cleavage and poly(A) addition. NUDT21/CPSF5 binds to cleavage and polyadenylation RNA substrates. The homodimer mediates simultaneous sequence-specific recognition of two 5'-UGUA-3' elements within the pre-mRNA. Binds to, but does not hydrolyze mono- and di-adenosine nucleotides. May have a role in mRNA export. The protein is Pre-mRNA cleavage factor Im 25 kDa subunit 2 of Arabidopsis thaliana (Mouse-ear cress).